We begin with the raw amino-acid sequence, 324 residues long: Protoheme IX farnesyltransferase (324 aa).

A run of 9 helical transmembrane segments spans residues leucine 31 to valine 51, proline 53 to isoleucine 73, leucine 104 to leucine 124, leucine 125 to leucine 145, isoleucine 153 to glycine 173, valine 181 to isoleucine 201, threonine 222 to tyrosine 242, proline 243 to isoleucine 263, and phenylalanine 285 to threonine 305.

It belongs to the UbiA prenyltransferase family. Protoheme IX farnesyltransferase subfamily.

It localises to the cell inner membrane. It catalyses the reaction heme b + (2E,6E)-farnesyl diphosphate + H2O = Fe(II)-heme o + diphosphate. The protein operates within porphyrin-containing compound metabolism; heme O biosynthesis; heme O from protoheme: step 1/1. Converts heme B (protoheme IX) to heme O by substitution of the vinyl group on carbon 2 of heme B porphyrin ring with a hydroxyethyl farnesyl side group. This is Protoheme IX farnesyltransferase from Cyanothece sp. (strain PCC 7425 / ATCC 29141).